Here is a 205-residue protein sequence, read N- to C-terminus: MKYTGSIFKRSRRLGFSLLENNKEFSKGKKRKTIPGQHGNRFRSSTMSGYAQQLQEKQRMQYMYGITDKQFRRLFRLVLKQRGNLAVNLFRVLESRLDNIVYRMGFAPTRRSARQLVNHGHVLLNDRTVDTPSIILNPGDKVRLKAKTIKIPIVKAASESGVVSPFVETNNKTFEGTYVRFPERSELPAGINESYVVEWYKRLVK.

One can recognise an S4 RNA-binding domain in the interval 95 to 156; it reads SRLDNIVYRM…KTIKIPIVKA (62 aa).

The protein belongs to the universal ribosomal protein uS4 family. As to quaternary structure, part of the 30S ribosomal subunit. Contacts protein S5. The interaction surface between S4 and S5 is involved in control of translational fidelity.

One of the primary rRNA binding proteins, it binds directly to 16S rRNA where it nucleates assembly of the body of the 30S subunit. Its function is as follows. With S5 and S12 plays an important role in translational accuracy. The sequence is that of Small ribosomal subunit protein uS4 from Mycoplasma pneumoniae (strain ATCC 29342 / M129 / Subtype 1) (Mycoplasmoides pneumoniae).